The chain runs to 568 residues: MFSYLPRYPLRAASARALVRATRPSYRSALLRYQSSEAVGRTQEIVPGAYQIPPRDFSRQHEEKLAPKNAARAPRRIEPATLKLNSKNLSQLQNVTVPTYQREGVKQGIVHVGVGGFHRAHLAAYVDTLLEQFNSQDWSICGVDLQPFAAPMRDALGSQDNLYTMIECDTEGTSARVIGSITDYLFAPDNCEAVIAKMAHPDTHIVSMTVTESGYYMNENTHELQIDHPDIAADLAGQQPPRTVFAYLYAALARRHAAGLRPFTVMSCDNMQKNGDISRNMLLAFARQQNPEVADWIAENGAFPNSMVDRITPRTSDENKAQLAQEFGVEDSWPVVTEVFHQWVLEDKFADGRPPFEKAGVQVVPNVHKVEEYELIKLRLLNASHSAMGYAGYLGGFTYIHEVIADPTFRKYIRNMMQEEVQPLLPRIPGVSVDDYCNTLLGRFSNPTLKDELPRICLGGSGKIPQFIMPSIAEQIQAGGPLRRLTLCAAAWFRYLRGINEQGQAFKLDDPMAEELQAKALESPFSVLEVKSLFGDDLRDDKRFVAELKNALESLERDGARATIAQYA.

NAD(+) is bound at residue isoleucine 109–alanine 120.

Belongs to the mannitol dehydrogenase family. Monomer.

The catalysed reaction is D-mannitol + NAD(+) = D-fructose + NADH + H(+). Catalyzes the NAD(H)-dependent interconversion of D-fructose and D-mannitol in the mannitol metabolic pathway. In Phaeosphaeria nodorum (strain SN15 / ATCC MYA-4574 / FGSC 10173) (Glume blotch fungus), this protein is Mannitol 2-dehydrogenase.